The chain runs to 340 residues: Ferrochelatase (340 aa).

Fe cation is bound by residues histidine 218 and glutamate 298.

It belongs to the ferrochelatase family.

It is found in the cytoplasm. The enzyme catalyses heme b + 2 H(+) = protoporphyrin IX + Fe(2+). The protein operates within porphyrin-containing compound metabolism; protoheme biosynthesis; protoheme from protoporphyrin-IX: step 1/1. Functionally, catalyzes the ferrous insertion into protoporphyrin IX. In Wolbachia sp. subsp. Brugia malayi (strain TRS), this protein is Ferrochelatase.